A 364-amino-acid chain; its full sequence is Alanine racemase (364 aa).

K35 functions as the Proton acceptor; specific for D-alanine in the catalytic mechanism. N6-(pyridoxal phosphate)lysine is present on K35. R131 serves as a coordination point for substrate. Residue Y256 is the Proton acceptor; specific for L-alanine of the active site. M304 is a binding site for substrate.

Belongs to the alanine racemase family. Pyridoxal 5'-phosphate is required as a cofactor.

It catalyses the reaction L-alanine = D-alanine. Its pathway is amino-acid biosynthesis; D-alanine biosynthesis; D-alanine from L-alanine: step 1/1. Functionally, catalyzes the interconversion of L-alanine and D-alanine. May also act on other amino acids. The protein is Alanine racemase (alr) of Halorhodospira halophila (strain DSM 244 / SL1) (Ectothiorhodospira halophila (strain DSM 244 / SL1)).